The primary structure comprises 451 residues: Probable D-serine dehydratase (451 aa).

The segment at 1-55 is disordered; sequence MPGRTRPSCRLAITFTPRPDSATPRAGRAAPATGRRSNRSRSTLSATASPMPRRP. A compositionally biased stretch (low complexity) spans 22 to 35; the sequence is ATPRAGRAAPATGR. K118 is subject to N6-(pyridoxal phosphate)lysine.

This sequence belongs to the serine/threonine dehydratase family. DsdA subfamily. It depends on pyridoxal 5'-phosphate as a cofactor.

The catalysed reaction is D-serine = pyruvate + NH4(+). This chain is Probable D-serine dehydratase, found in Paracidovorax citrulli (strain AAC00-1) (Acidovorax citrulli).